Reading from the N-terminus, the 409-residue chain is Serine/threonine transporter SstT (409 aa).

9 helical membrane passes run 15-35 (LSLV…ALLA), 49-69 (FVSA…MASI), 82-102 (PILV…VIAS), 142-162 (ALMN…GVAI), 193-213 (LGIF…ALLG), 218-238 (LAVL…LIVF), 301-321 (GAAI…GIAV), 331-351 (VVAA…LLLI), and 357-377 (LFGI…IIGV).

Belongs to the dicarboxylate/amino acid:cation symporter (DAACS) (TC 2.A.23) family.

It is found in the cell inner membrane. It catalyses the reaction L-serine(in) + Na(+)(in) = L-serine(out) + Na(+)(out). The catalysed reaction is L-threonine(in) + Na(+)(in) = L-threonine(out) + Na(+)(out). Involved in the import of serine and threonine into the cell, with the concomitant import of sodium (symport system). In Pseudomonas fluorescens (strain ATCC BAA-477 / NRRL B-23932 / Pf-5), this protein is Serine/threonine transporter SstT.